A 465-amino-acid chain; its full sequence is GTPase Der (465 aa).

2 EngA-type G domains span residues 3–167 and 179–352; these read PLVA…PEEG and VRIA…ASAT. Residues 9-16, 57-61, 119-122, 185-192, 232-236, and 297-300 each bind GTP; these read GRPNVGKS, DTGGI, NKID, DTAGL, and NKWD. Residues 353–437 form the KH-like domain; sequence HEFSTSEVNQ…PVRFIFREGA (85 aa).

It belongs to the TRAFAC class TrmE-Era-EngA-EngB-Septin-like GTPase superfamily. EngA (Der) GTPase family. Associates with the 50S ribosomal subunit.

Functionally, GTPase that plays an essential role in the late steps of ribosome biogenesis. This chain is GTPase Der, found in Xanthomonas axonopodis pv. citri (strain 306).